Consider the following 219-residue polypeptide: Protein RhiB (219 aa).

A compositionally biased stretch (polar residues) spans 174 to 195; the sequence is AGISQQGNAAGTSISSKSTGSP. The segment at 174–201 is disordered; the sequence is AGISQQGNAAGTSISSKSTGSPENPART.

May be involved in plant-microbe interaction. This Rhizobium leguminosarum bv. viciae protein is Protein RhiB (rhiB).